A 429-amino-acid chain; its full sequence is Xyloglucan O-acetyltransferase 1 (429 aa).

Topologically, residues 1 to 20 (MGSPFKDHHHHHHPFSLAKK) are cytoplasmic. Residues 21-41 (LIPWTFYAMIPLVLFRLYFYP) form a helical; Signal-anchor for type II membrane protein membrane-spanning segment. At 42 to 429 (YPLHNITTPI…KWDYESRREE (388 aa)) the chain is on the lumenal side. Asn46 and Asn89 each carry an N-linked (GlcNAc...) asparagine glycan. Disulfide bonds link Cys72/Cys122, Cys93/Cys158, Cys102/Cys402, and Cys317/Cys398. Positions 145 to 147 (GDS) match the GDS motif motif. The active-site Nucleophile is Ser147. N-linked (GlcNAc...) asparagine glycosylation is found at Asn189, Asn263, and Asn351. Catalysis depends on Asp397, which acts as the Proton donor. The DXXH motif motif lies at 397–400 (DCVH). Residue His400 is the Proton acceptor of the active site.

The protein belongs to the PC-esterase family. TBL subfamily.

It localises to the golgi apparatus membrane. In terms of biological role, xyloglucan acetyltransferase that catalyzes the acetylation of fucosylated Gal residues on xyloglucan side chains. Predominantly catalyze 6-O-monoacetylation of Gal residues in the Fuc-Gal-Xyl trisaccharide side chains of xyloglucan oligomers. The chain is Xyloglucan O-acetyltransferase 1 from Populus trichocarpa (Western balsam poplar).